An 800-amino-acid polypeptide reads, in one-letter code: Ion-translocating oxidoreductase complex subunit C (800 aa).

4Fe-4S ferredoxin-type domains are found at residues 367–398 and 408–437; these read DEFS…QQLY and KARG…VQYY. [4Fe-4S] cluster contacts are provided by cysteine 378, cysteine 381, cysteine 384, cysteine 388, cysteine 417, cysteine 420, cysteine 423, and cysteine 427. Composition is skewed to low complexity over residues 536–553, 571–583, 599–617, 647–667, and 675–690; these read GATP…APAP, AKQA…PAAT, AAIA…APAA, AKQA…ADPA, and AAIA…KQAA. 3 disordered regions span residues 536-558, 571-631, and 647-706; these read GATP…DDPR, AKQA…QDDP, and AKQA…ENTD. Polar residues predominate over residues 693 to 705; it reads HATTEPVTVQENT.

The protein belongs to the 4Fe4S bacterial-type ferredoxin family. RnfC subfamily. As to quaternary structure, the complex is composed of six subunits: RnfA, RnfB, RnfC, RnfD, RnfE and RnfG. [4Fe-4S] cluster serves as cofactor.

It localises to the cell inner membrane. Part of a membrane-bound complex that couples electron transfer with translocation of ions across the membrane. This Edwardsiella ictaluri (strain 93-146) protein is Ion-translocating oxidoreductase complex subunit C.